The sequence spans 174 residues: Ubiquitin-like protein 4B (174 aa).

The Ubiquitin-like domain maps to 1–76 (MFLTVKLLLG…INVIMQPLEK (76 aa)). The segment covering 141–156 (EPHVEPAGERELEAKA) has biased composition (basic and acidic residues). The interval 141–174 (EPHVEPAGERELEAKARPQSSCDMEEKEEAAADQ) is disordered. A compositionally biased stretch (acidic residues) spans 163–174 (DMEEKEEAAADQ).

The protein localises to the cytoplasm. The chain is Ubiquitin-like protein 4B (UBL4B) from Homo sapiens (Human).